A 622-amino-acid polypeptide reads, in one-letter code: 1-deoxy-D-xylulose-5-phosphate synthase (622 aa).

Thiamine diphosphate is bound by residues H71 and 112–114 (GHS). D143 lines the Mg(2+) pocket. Residues 144–145 (GA), N172, Y283, and E363 each bind thiamine diphosphate. N172 contributes to the Mg(2+) binding site.

Belongs to the transketolase family. DXPS subfamily. As to quaternary structure, homodimer. Mg(2+) serves as cofactor. Thiamine diphosphate is required as a cofactor.

The enzyme catalyses D-glyceraldehyde 3-phosphate + pyruvate + H(+) = 1-deoxy-D-xylulose 5-phosphate + CO2. It participates in metabolic intermediate biosynthesis; 1-deoxy-D-xylulose 5-phosphate biosynthesis; 1-deoxy-D-xylulose 5-phosphate from D-glyceraldehyde 3-phosphate and pyruvate: step 1/1. Its function is as follows. Catalyzes the acyloin condensation reaction between C atoms 2 and 3 of pyruvate and glyceraldehyde 3-phosphate to yield 1-deoxy-D-xylulose-5-phosphate (DXP). This chain is 1-deoxy-D-xylulose-5-phosphate synthase, found in Caldanaerobacter subterraneus subsp. tengcongensis (strain DSM 15242 / JCM 11007 / NBRC 100824 / MB4) (Thermoanaerobacter tengcongensis).